The chain runs to 338 residues: Ketol-acid reductoisomerase (NADP(+)) (338 aa).

The KARI N-terminal Rossmann domain occupies 1 to 181 (MKVYYDKDAD…GGTKGGVIET (181 aa)). NADP(+) is bound by residues 24–27 (YGSQ), Arg-47, and Ser-52. Residue His-107 is part of the active site. Gly-133 serves as a coordination point for NADP(+). One can recognise a KARI C-terminal knotted domain in the interval 182–327 (NFREETETDL…SQLRAMMPWI (146 aa)). Mg(2+) is bound by residues Asp-190, Glu-194, Glu-226, and Glu-230. Ser-251 lines the substrate pocket.

The protein belongs to the ketol-acid reductoisomerase family. Mg(2+) is required as a cofactor.

The enzyme catalyses (2R)-2,3-dihydroxy-3-methylbutanoate + NADP(+) = (2S)-2-acetolactate + NADPH + H(+). It catalyses the reaction (2R,3R)-2,3-dihydroxy-3-methylpentanoate + NADP(+) = (S)-2-ethyl-2-hydroxy-3-oxobutanoate + NADPH + H(+). The protein operates within amino-acid biosynthesis; L-isoleucine biosynthesis; L-isoleucine from 2-oxobutanoate: step 2/4. Its pathway is amino-acid biosynthesis; L-valine biosynthesis; L-valine from pyruvate: step 2/4. Involved in the biosynthesis of branched-chain amino acids (BCAA). Catalyzes an alkyl-migration followed by a ketol-acid reduction of (S)-2-acetolactate (S2AL) to yield (R)-2,3-dihydroxy-isovalerate. In the isomerase reaction, S2AL is rearranged via a Mg-dependent methyl migration to produce 3-hydroxy-3-methyl-2-ketobutyrate (HMKB). In the reductase reaction, this 2-ketoacid undergoes a metal-dependent reduction by NADPH to yield (R)-2,3-dihydroxy-isovalerate. This Methylobacillus flagellatus (strain ATCC 51484 / DSM 6875 / VKM B-1610 / KT) protein is Ketol-acid reductoisomerase (NADP(+)).